The sequence spans 171 residues: Adenine phosphoribosyltransferase (171 aa).

Belongs to the purine/pyrimidine phosphoribosyltransferase family. Homodimer.

The protein resides in the cytoplasm. The catalysed reaction is AMP + diphosphate = 5-phospho-alpha-D-ribose 1-diphosphate + adenine. It participates in purine metabolism; AMP biosynthesis via salvage pathway; AMP from adenine: step 1/1. Its function is as follows. Catalyzes a salvage reaction resulting in the formation of AMP, that is energically less costly than de novo synthesis. This chain is Adenine phosphoribosyltransferase, found in Rhodospirillum rubrum (strain ATCC 11170 / ATH 1.1.1 / DSM 467 / LMG 4362 / NCIMB 8255 / S1).